The following is a 302-amino-acid chain: MTEIEQAYRITESITRTAARNFYYGIRLLPREKRAALSAVYALGRRIDDVADGELAPETKITELDAIRKSLDNIDDSSDPVLVALADAARRFPVPIAMFAELIDGARMEIDWTGCRDFDELIVYCRRGAGTIGKLCLSIFGPVSTATSRYAEQLGIALQQTNILRDVREDFLNGRIYLPRDELDRLGVRLRLDDTGALDDPDGRLAALLRFSADRAADWYSLGLRLIPHLDRRSAACCAAMSGIYRRQLALIRASPAVVYDRRISLSGLKKAQVAAAALASSVTCGPAHGPLPADLGSHPSH.

The protein belongs to the phytoene/squalene synthase family. It depends on ATP as a cofactor. Mn(2+) is required as a cofactor. Requires Mg(2+) as cofactor.

Its pathway is carotenoid biosynthesis; phytoene biosynthesis. Functionally, involved in the biosynthesis of carotenoids. Catalyzes the condensation of two molecules of geranylgeranyl diphosphate (GGPP) to give prephytoene diphosphate (PPPP) and the subsequent rearrangement of the cyclopropylcarbinyl intermediate to yield phytoene. The chain is Phytoene synthase (crtB) from Mycobacterium bovis (strain ATCC BAA-935 / AF2122/97).